A 760-amino-acid chain; its full sequence is RxLR effector protein PSR2 (760 aa).

The first 21 residues, 1–21 (MGCRYAVLALAVAYFAGSIAA), serve as a signal peptide directing secretion. The short motif at 47 to 62 (RFLRAANTADERNEDR) is the RxLR-dEER element. The WY1 repeat unit spans residues 87 to 134 (PLLSWFEKKKSPDYVFLKLKINKGKQQLFDHPDWNVWVQYTTSVVKSD). The tract at residues 87-760 (PLLSWFEKKK…TTKYMERYGQ (674 aa)) is 7 X 93 AA tandem repeats. The stretch at 135 to 221 (PEEAMIAALR…MKLYNSKPVN (87 aa)) is one LWY2 repeat. An LWY3 repeat occupies 222-312 (KKQQVTLVSM…KYVDNYNRDF (91 aa)). The stretch at 313–403 (PDEATTVMAT…KYVEDLNLKP (91 aa)) is one LWY4 repeat. Residues 404-496 (EHNDLQVSII…KFLEHYYKSF (93 aa)) form an LWY5 repeat. The stretch at 497-584 (PTPMMSALAK…RYLDEFNKKF (88 aa)) is one LWY6 repeat. The stretch at 585–760 (PDEKVSMTDT…TTKYMERYGQ (176 aa)) is one LWY7 repeat.

The protein belongs to the RxLR effector family. Interacts with host dsRNA-binding protein DRB4.

The protein localises to the secreted. The protein resides in the host cell. Secreted effector that possesses RNA silencing suppression activity by inhibiting the biogenesis of small RNAs in the host plant to promote enhanced susceptibility of host to the pathogen during infection. Interferes with secondary siRNA production by associating with host dsRNA-binding protein DRB4. Inhibits the host salicylic acid pathway during infection. The polypeptide is RxLR effector protein PSR2 (Phytophthora infestans (strain T30-4) (Potato late blight agent)).